The chain runs to 226 residues: Cytidylate kinase (226 aa).

12-20 (GPSGAGKGT) contacts ATP.

This sequence belongs to the cytidylate kinase family. Type 1 subfamily.

The protein localises to the cytoplasm. It catalyses the reaction CMP + ATP = CDP + ADP. The enzyme catalyses dCMP + ATP = dCDP + ADP. In Colwellia psychrerythraea (strain 34H / ATCC BAA-681) (Vibrio psychroerythus), this protein is Cytidylate kinase.